The chain runs to 715 residues: Protein psiH (715 aa).

A signal peptide spans 1–20; it reads MNYLKPTIFLILCLVTFVYS. Residues 21–651 lie on the Extracellular side of the membrane; that stretch reads QPSTLTIQGT…ICKTGAVVST (631 aa). The PA14 domain occupies 115–256; the sequence is NYDSKKQVYV…YDYCGVCSGD (142 aa). N-linked (GlcNAc...) asparagine glycosylation is found at asparagine 149, asparagine 377, asparagine 528, and asparagine 622. A helical transmembrane segment spans residues 652-672; the sequence is AVIAGVTVAGAVALGVFIYGG. Topologically, residues 673–715 are cytoplasmic; it reads KRGYDYWKESRNVQFSGSNSNPLYEQNPNGSGVNPLYNDNSAL. The interval 690–715 is disordered; it reads SNSNPLYEQNPNGSGVNPLYNDNSAL.

It belongs to the prespore-cell-inducing factor family.

The protein resides in the membrane. In Dictyostelium discoideum (Social amoeba), this protein is Protein psiH (psiH).